The primary structure comprises 176 residues: RNA pyrophosphohydrolase (176 aa).

A Nudix hydrolase domain is found at 6–149; sequence GYRPNVGIIL…KRQVYQQALF (144 aa). The Nudix box motif lies at 38 to 59; that stretch reads GGIKHGESPEQAMFRELFEEVG.

The protein belongs to the Nudix hydrolase family. RppH subfamily. A divalent metal cation serves as cofactor.

Functionally, accelerates the degradation of transcripts by removing pyrophosphate from the 5'-end of triphosphorylated RNA, leading to a more labile monophosphorylated state that can stimulate subsequent ribonuclease cleavage. In Aromatoleum aromaticum (strain DSM 19018 / LMG 30748 / EbN1) (Azoarcus sp. (strain EbN1)), this protein is RNA pyrophosphohydrolase.